Consider the following 427-residue polypeptide: Ectonucleoside triphosphate diphosphohydrolase 5 (427 aa).

A signal peptide spans 1–24 (MATSWGAVFMLIIACVGSTVFYRE). The active-site Proton acceptor is the Glu171. N-linked (GlcNAc...) asparagine glycosylation occurs at Asn231. Cystine bridges form between Cys271-Cys302 and Cys362-Cys376.

It belongs to the GDA1/CD39 NTPase family. In terms of assembly, monomer; active form. Homodimer; disulfide-linked. Homodimers are enzymatically inactive. It depends on Ca(2+) as a cofactor. Mg(2+) is required as a cofactor. Post-translationally, N-glycosylated; high-mannose type. Ubiquitous.

It localises to the endoplasmic reticulum. Its subcellular location is the secreted. It catalyses the reaction a ribonucleoside 5'-diphosphate + H2O = a ribonucleoside 5'-phosphate + phosphate + H(+). The catalysed reaction is GDP + H2O = GMP + phosphate + H(+). It carries out the reaction UDP + H2O = UMP + phosphate + H(+). The enzyme catalyses IDP + H2O = IMP + phosphate + H(+). It catalyses the reaction CDP + H2O = CMP + phosphate + H(+). The catalysed reaction is ADP + H2O = AMP + phosphate + H(+). It functions in the pathway protein modification; protein glycosylation. Hydrolyzes nucleoside diphosphates with a preference for GDP, IDP and UDP compared to ADP and CDP. In the lumen of the endoplasmic reticulum, hydrolyzes UDP that acts as an end-product feedback inhibitor of the UDP-Glc:glycoprotein glucosyltransferases. UMP can be transported back by an UDP-sugar antiporter to the cytosol where it is consumed to regenerate UDP-glucose. Therefore, it positively regulates protein reglucosylation by clearing UDP from the ER lumen and by promoting the regeneration of UDP-glucose. Protein reglucosylation is essential to proper glycoprotein folding and quality control in the ER. The polypeptide is Ectonucleoside triphosphate diphosphohydrolase 5 (Entpd5) (Mus musculus (Mouse)).